Reading from the N-terminus, the 458-residue chain is ATP synthase subunit beta (458 aa).

148–155 (GGAGVGKT) contributes to the ATP binding site.

This sequence belongs to the ATPase alpha/beta chains family. As to quaternary structure, F-type ATPases have 2 components, CF(1) - the catalytic core - and CF(0) - the membrane proton channel. CF(1) has five subunits: alpha(3), beta(3), gamma(1), delta(1), epsilon(1). CF(0) has three main subunits: a(1), b(2) and c(9-12). The alpha and beta chains form an alternating ring which encloses part of the gamma chain. CF(1) is attached to CF(0) by a central stalk formed by the gamma and epsilon chains, while a peripheral stalk is formed by the delta and b chains.

Its subcellular location is the cell inner membrane. It carries out the reaction ATP + H2O + 4 H(+)(in) = ADP + phosphate + 5 H(+)(out). Produces ATP from ADP in the presence of a proton gradient across the membrane. The catalytic sites are hosted primarily by the beta subunits. This chain is ATP synthase subunit beta, found in Francisella tularensis subsp. tularensis (strain FSC 198).